The primary structure comprises 665 residues: Golgi-associated RAB2B interactor protein 3 (665 aa).

Disordered stretches follow at residues 211 to 240 (EIRG…AGGE), 272 to 296 (AAAG…GTAG), and 480 to 590 (SEGY…GSVS). The span at 219–232 (NSRPQSSPTVSEAT) shows a compositional bias: polar residues. Residues 499–513 (EAKEKRERREKDRTS) are compositionally biased toward basic and acidic residues. Composition is skewed to basic residues over residues 514–538 (SRKS…RKTS) and 554–566 (GHGR…HSSS). The short motif at 515–531 (RKSSHHRRTGMSRHSSK) is the Bipartite nuclear localization signal element. At Ser652 the chain carries Phosphoserine.

Belongs to the GARIN family. Interacts (via N-terminus) with RAB2B (in GTP-bound form). Interacts with FRG1. Expressed in adult spermatocytes and spermatids.

The protein resides in the golgi apparatus. It localises to the nucleus. It is found in the cajal body. In terms of biological role, may be involved in RNA biogenesis. This Mus musculus (Mouse) protein is Golgi-associated RAB2B interactor protein 3.